A 182-amino-acid polypeptide reads, in one-letter code: Ribosome maturation factor RimM (182 aa).

A PRC barrel domain is found at Asp-103–Phe-182.

Belongs to the RimM family. In terms of assembly, binds ribosomal protein uS19.

Its subcellular location is the cytoplasm. Functionally, an accessory protein needed during the final step in the assembly of 30S ribosomal subunit, possibly for assembly of the head region. Essential for efficient processing of 16S rRNA. May be needed both before and after RbfA during the maturation of 16S rRNA. It has affinity for free ribosomal 30S subunits but not for 70S ribosomes. In Citrobacter koseri (strain ATCC BAA-895 / CDC 4225-83 / SGSC4696), this protein is Ribosome maturation factor RimM.